Consider the following 157-residue polypeptide: 2-C-methyl-D-erythritol 2,4-cyclodiphosphate synthase (157 aa).

Residues Asp8 and His10 each contribute to the a divalent metal cation site. Residues 8 to 10 (DVH) and 34 to 35 (HS) each bind 4-CDP-2-C-methyl-D-erythritol 2-phosphate. His42 lines the a divalent metal cation pocket. 4-CDP-2-C-methyl-D-erythritol 2-phosphate is bound by residues 56-58 (DIG), 61-65 (FPDTD), 100-106 (AQAPKMA), 132-135 (TTTE), Phe139, and Arg142.

Belongs to the IspF family. In terms of assembly, homotrimer. The cofactor is a divalent metal cation.

It catalyses the reaction 4-CDP-2-C-methyl-D-erythritol 2-phosphate = 2-C-methyl-D-erythritol 2,4-cyclic diphosphate + CMP. Its pathway is isoprenoid biosynthesis; isopentenyl diphosphate biosynthesis via DXP pathway; isopentenyl diphosphate from 1-deoxy-D-xylulose 5-phosphate: step 4/6. Involved in the biosynthesis of isopentenyl diphosphate (IPP) and dimethylallyl diphosphate (DMAPP), two major building blocks of isoprenoid compounds. Catalyzes the conversion of 4-diphosphocytidyl-2-C-methyl-D-erythritol 2-phosphate (CDP-ME2P) to 2-C-methyl-D-erythritol 2,4-cyclodiphosphate (ME-CPP) with a corresponding release of cytidine 5-monophosphate (CMP). This Serratia proteamaculans (strain 568) protein is 2-C-methyl-D-erythritol 2,4-cyclodiphosphate synthase.